The sequence spans 342 residues: Succinylglutamate desuccinylase (342 aa).

Zn(2+)-binding residues include H64, E67, and H159. The active site involves E222.

This sequence belongs to the AspA/AstE family. Succinylglutamate desuccinylase subfamily. It depends on Zn(2+) as a cofactor.

It carries out the reaction N-succinyl-L-glutamate + H2O = L-glutamate + succinate. It functions in the pathway amino-acid degradation; L-arginine degradation via AST pathway; L-glutamate and succinate from L-arginine: step 5/5. Functionally, transforms N(2)-succinylglutamate into succinate and glutamate. This Burkholderia orbicola (strain MC0-3) protein is Succinylglutamate desuccinylase.